A 129-amino-acid chain; its full sequence is NHP2-like protein 1 homolog (129 aa).

It belongs to the eukaryotic ribosomal protein eL8 family.

The protein localises to the nucleus. It is found in the nucleolus. Binds to the 5'-stem-loop of U4 snRNA and may play a role in the late stage of spliceosome assembly. The protein undergoes a conformational change upon RNA-binding. This Dictyostelium discoideum (Social amoeba) protein is NHP2-like protein 1 homolog.